A 225-amino-acid chain; its full sequence is Cytidylate kinase (225 aa).

Residue G11–T19 coordinates ATP.

It belongs to the cytidylate kinase family. Type 1 subfamily.

It is found in the cytoplasm. The enzyme catalyses CMP + ATP = CDP + ADP. It catalyses the reaction dCMP + ATP = dCDP + ADP. The sequence is that of Cytidylate kinase from Bacillus pumilus (strain SAFR-032).